The sequence spans 710 residues: Cyclin-dependent kinase G-2 (710 aa).

Positions 1–350 are disordered; sequence MAAGRHGGYR…ETPEPVKPPH (350 aa). Basic and acidic residues predominate over residues 8-30; that stretch reads GYRDYEARERELDAEASRRSKEQ. Residues 31-40 show a composition bias toward basic residues; that stretch reads QHHHHPSGRH. The span at 41-64 shows a compositional bias: basic and acidic residues; the sequence is QRGDSDPRCEADRRRDGGRSRGGR. Over residues 124 to 133 the composition is skewed to low complexity; the sequence is SVVAASASSP. Residues 144-163 are compositionally biased toward basic and acidic residues; it reads WDRDSPKPMHSDVAKGKKAV. Residues 170–182 are compositionally biased toward pro residues; that stretch reads LPLPPPPPLPPQD. Basic and acidic residues-rich tracts occupy residues 183–195 and 209–218; these read HIPE…KSPM and LQEHAESRVM. The span at 299 to 308 shows a compositional bias: acidic residues; sequence DENEDLEVDK. Basic and acidic residues predominate over residues 335–344; sequence YEVRRSETPE. The region spanning 365–656 is the Protein kinase domain; it reads FERLNKINEG…ADAALQHEWF (292 aa). ATP-binding positions include 371–379 and K394; that span reads INEGTYGVV. Position 375 is a phosphothreonine (T375). Y376 carries the phosphotyrosine modification. D489 functions as the Proton acceptor in the catalytic mechanism. Position 516 is a phosphoserine (S516). A Phosphothreonine modification is found at T522.

Belongs to the protein kinase superfamily. CMGC Ser/Thr protein kinase family. CDC2/CDKX subfamily.

The enzyme catalyses L-seryl-[protein] + ATP = O-phospho-L-seryl-[protein] + ADP + H(+). It carries out the reaction L-threonyl-[protein] + ATP = O-phospho-L-threonyl-[protein] + ADP + H(+). It catalyses the reaction [DNA-directed RNA polymerase] + ATP = phospho-[DNA-directed RNA polymerase] + ADP + H(+). The polypeptide is Cyclin-dependent kinase G-2 (CDKG-2) (Oryza sativa subsp. indica (Rice)).